Reading from the N-terminus, the 148-residue chain is Translation initiation factor 2 subunit beta (148 aa).

It belongs to the eIF-2-beta/eIF-5 family. In terms of assembly, heterotrimer composed of an alpha, a beta and a gamma chain.

EIF-2 functions in the early steps of protein synthesis by forming a ternary complex with GTP and initiator tRNA. This is Translation initiation factor 2 subunit beta (eif2b) from Aeropyrum pernix (strain ATCC 700893 / DSM 11879 / JCM 9820 / NBRC 100138 / K1).